The sequence spans 227 residues: Protein CAP22 (227 aa).

N-linked (GlcNAc...) asparagine glycans are attached at residues Asn55 and Asn72. The interval Thr143 to Asp162 is disordered.

Its subcellular location is the secreted. The protein resides in the cell wall. This Colletotrichum gloeosporioides (Anthracnose fungus) protein is Protein CAP22 (CAP22).